We begin with the raw amino-acid sequence, 149 residues long: Probable flagellum biosynthesis repressor protein FlbT (149 aa).

This sequence belongs to the FlbT family.

Functionally, has a post-transcriptional repressor function in flagellum biogenesis. Associates with the 5'-UTR of fljK mRNA and promotes its degradation. The sequence is that of Probable flagellum biosynthesis repressor protein FlbT from Sinorhizobium medicae (strain WSM419) (Ensifer medicae).